The sequence spans 379 residues: Cell division protein FtsZ (379 aa).

Residues 18–22 (GGGVN), 105–107 (GTG), glutamate 136, arginine 140, and aspartate 184 each bind GTP.

The protein belongs to the FtsZ family. As to quaternary structure, homodimer. Polymerizes to form a dynamic ring structure in a strictly GTP-dependent manner. Interacts directly with several other division proteins.

It localises to the cytoplasm. Functionally, essential cell division protein that forms a contractile ring structure (Z ring) at the future cell division site. The regulation of the ring assembly controls the timing and the location of cell division. One of the functions of the FtsZ ring is to recruit other cell division proteins to the septum to produce a new cell wall between the dividing cells. Binds GTP and shows GTPase activity. The polypeptide is Cell division protein FtsZ (Mycobacterium bovis (strain ATCC BAA-935 / AF2122/97)).